Reading from the N-terminus, the 359-residue chain is Cytohesin-interacting protein (359 aa).

The 90-residue stretch at 77-166 folds into the PDZ domain; sequence LVTVEKQDNE…LLTIETLNGT (90 aa). The segment at 166–188 is interaction with CYTH1; that stretch reads TMILKRTELEAKLQVLKQTLKQK. The stretch at 166–188 forms a coiled coil; it reads TMILKRTELEAKLQVLKQTLKQK.

In terms of assembly, interacts with CYTH1 and SNX27. In terms of tissue distribution, expressed in lymph nodes, thymus, spleen, lung, peripheral blood leukocytes and bone marrow.

It is found in the cytoplasm. The protein resides in the early endosome. By its binding to cytohesin-1 (CYTH1), it modifies activation of ARFs by CYTH1 and its precise function may be to sequester CYTH1 in the cytoplasm. This is Cytohesin-interacting protein (CYTIP) from Homo sapiens (Human).